A 369-amino-acid chain; its full sequence is L-lactate oxidase (369 aa).

The FMN hydroxy acid dehydrogenase domain occupies 13 to 369 (EKKLNVLNLD…KNAKLLNIRY (357 aa)). Tyr-39 lines the pyruvate pocket. FMN contacts are provided by residues 92–94 (PAA), Ser-121, and Gln-143. Residue Tyr-145 coordinates pyruvate. Thr-171 serves as a coordination point for FMN. Position 180 (Arg-180) interacts with pyruvate. Residues Lys-240 and Ser-262 each coordinate FMN. His-264 and Arg-267 together coordinate pyruvate. The Proton acceptor role is filled by His-264. FMN is bound by residues 295–299 (DSGIR) and Arg-319.

The protein belongs to the FMN-dependent alpha-hydroxy acid dehydrogenase family. In terms of assembly, homotetramer. FMN is required as a cofactor.

It catalyses the reaction (S)-lactate + O2 = pyruvate + H2O2. Its function is as follows. Catalyzes the oxidation of (S)-lactate (L-lactate) to pyruvate, with a reduction of O2 to H2O2. May be involved in the utilization of L-lactate as an energy source for growth. The chain is L-lactate oxidase from Lentilactobacillus hilgardii (strain ATCC 8290 / DSM 20176 / CCUG 30140 / JCM 1155 / KCTC 3500 / NBRC 15886 / NCIMB 8040 / NRRL B-1843 / 9).